A 406-amino-acid polypeptide reads, in one-letter code: Tryptophan 2,3-dioxygenase (406 aa).

Phosphoserine is present on serine 19. Substrate-binding positions include 72 to 76 (FIITH) and arginine 144. Histidine 328 lines the heme pocket. Threonine 342 is a substrate binding site.

This sequence belongs to the tryptophan 2,3-dioxygenase family. In terms of assembly, homotetramer. Dimer of dimers. Heme is required as a cofactor. As to expression, liver.

The catalysed reaction is L-tryptophan + O2 = N-formyl-L-kynurenine. Its pathway is amino-acid degradation; L-tryptophan degradation via kynurenine pathway; L-kynurenine from L-tryptophan: step 1/2. Functionally, heme-dependent dioxygenase that catalyzes the oxidative cleavage of the L-tryptophan (L-Trp) pyrrole ring and converts L-tryptophan to N-formyl-L-kynurenine. Catalyzes the oxidative cleavage of the indole moiety. This Rattus norvegicus (Rat) protein is Tryptophan 2,3-dioxygenase.